The following is a 151-amino-acid chain: UPF0178 protein Hhal_1913 (151 aa).

The protein belongs to the UPF0178 family.

This is UPF0178 protein Hhal_1913 from Halorhodospira halophila (strain DSM 244 / SL1) (Ectothiorhodospira halophila (strain DSM 244 / SL1)).